A 745-amino-acid polypeptide reads, in one-letter code: Probable xanthine dehydrogenase subunit D (745 aa).

The Mo-molybdopterin site is built by glutamine 204, phenylalanine 235, and alanine 508.

It belongs to the xanthine dehydrogenase family. As to quaternary structure, could be composed of four subunits: PucA, PucC, PucD and PucE. The cofactor is Mo-molybdopterin.

The catalysed reaction is xanthine + NAD(+) + H2O = urate + NADH + H(+). The enzyme catalyses hypoxanthine + NAD(+) + H2O = xanthine + NADH + H(+). It participates in purine metabolism; hypoxanthine degradation; urate from hypoxanthine: step 1/2. It functions in the pathway purine metabolism; hypoxanthine degradation; urate from hypoxanthine: step 2/2. Its function is as follows. Oxidizes hypoxanthine and xanthine to uric acid. The chain is Probable xanthine dehydrogenase subunit D (pucD) from Bacillus subtilis (strain 168).